The chain runs to 451 residues: tRNA(Ile)-lysidine synthase (451 aa).

Ser21–Ser26 contacts ATP.

This sequence belongs to the tRNA(Ile)-lysidine synthase family.

It is found in the cytoplasm. The enzyme catalyses cytidine(34) in tRNA(Ile2) + L-lysine + ATP = lysidine(34) in tRNA(Ile2) + AMP + diphosphate + H(+). Ligates lysine onto the cytidine present at position 34 of the AUA codon-specific tRNA(Ile) that contains the anticodon CAU, in an ATP-dependent manner. Cytidine is converted to lysidine, thus changing the amino acid specificity of the tRNA from methionine to isoleucine. This Yersinia pseudotuberculosis serotype O:1b (strain IP 31758) protein is tRNA(Ile)-lysidine synthase.